A 247-amino-acid polypeptide reads, in one-letter code: Transmembrane protein 33 (247 aa).

Ala-2 is modified (N-acetylalanine). Topologically, residues 2–31 (ADTTPNGPQGAGAVQFMMTNKLDTAMWLSR) are lumenal. A helical membrane pass occupies residues 32–52 (LFTVYCSALFVLPLLGLHEAA). Topologically, residues 53–100 (SFYQRALLANALTSALRLHQRLPHFQLSRAFLAQALLEDSCHYLLYSL) are cytoplasmic. A helical membrane pass occupies residues 101 to 121 (IFVNSYPVTMSIFPVLLFSLL). Residues 122–155 (HAATYTKKVLDARGSNSLPLLRSVLDKLSANQQN) lie on the Lumenal side of the membrane. A helical transmembrane segment spans residues 156-176 (ILKFIACNEIFLMPATVFMLF). The Cytoplasmic portion of the chain corresponds to 177-247 (SGQGSLLQPF…FISRLAPTVP (71 aa)).

Belongs to the PER33/POM33 family. As to quaternary structure, interacts with EIF2AK3. Interacts with ARL6IP1, isoform RTN1-A of RTN1, isoform RTN2-B of RTN2, isoform 3 of RTN3 and isoform 3 of RTN4. Interacts with RNF5. Interacts with RNF26. Interacts with PKD2. As to expression, prostate cancer and several cancer cell lines (at protein level). Widely expressed. Expressed at higher levels in endocrine-resistant breast cancer cells as compared to endocrine-sensitive breast cancer cells. Expressed at higher levels in early recurrence breast cancer tissues as compared to non-recurrent breast tumors.

The protein localises to the endoplasmic reticulum membrane. Its subcellular location is the melanosome. It localises to the nucleus envelope. Acts as a regulator of the tubular endoplasmic reticulum (ER) network by modulating intracellular calcium homeostasis. Mechanistically, stimulates PKD2 calcium-dependent activity. Suppresses the RTN3/4-induced formation of the ER tubules. Positively regulates PERK-mediated and IRE1-mediated unfolded protein response signaling. Plays an essential role in VEGF-mediated release of Ca(2+) from ER stores during angiogenesis. Also plays a role in the modulation of innate immune signaling through the cGAS-STING pathway by interacting with RNF26. Participates in lipid metabolism by acting as a downstream effector of the pyruvate kinase/PKM. Forms a complex with RNF5 to facilitate polyubiquitination and subsequent degradation of SCAP on the ER membrane. The protein is Transmembrane protein 33 (TMEM33) of Homo sapiens (Human).